Reading from the N-terminus, the 122-residue chain is Small ribosomal subunit protein uS13 (122 aa).

Residues 97-122 form a disordered region; the sequence is PVRGQRTHTNAKTRKGRSKLPIAGKK.

It belongs to the universal ribosomal protein uS13 family. Part of the 30S ribosomal subunit. Forms a loose heterodimer with protein S19. Forms two bridges to the 50S subunit in the 70S ribosome.

Functionally, located at the top of the head of the 30S subunit, it contacts several helices of the 16S rRNA. In the 70S ribosome it contacts the 23S rRNA (bridge B1a) and protein L5 of the 50S subunit (bridge B1b), connecting the 2 subunits; these bridges are implicated in subunit movement. Contacts the tRNAs in the A and P-sites. The polypeptide is Small ribosomal subunit protein uS13 (Wolbachia pipientis subsp. Culex pipiens (strain wPip)).